Here is a 152-residue protein sequence, read N- to C-terminus: Deoxyuridine 5'-triphosphate nucleotidohydrolase (152 aa).

Substrate-binding positions include Arg-71–Gly-73, Asn-84, Leu-88–Asp-90, and Met-98.

Belongs to the dUTPase family. It depends on Mg(2+) as a cofactor.

The catalysed reaction is dUTP + H2O = dUMP + diphosphate + H(+). The protein operates within pyrimidine metabolism; dUMP biosynthesis; dUMP from dCTP (dUTP route): step 2/2. Functionally, this enzyme is involved in nucleotide metabolism: it produces dUMP, the immediate precursor of thymidine nucleotides and it decreases the intracellular concentration of dUTP so that uracil cannot be incorporated into DNA. In Shigella flexneri, this protein is Deoxyuridine 5'-triphosphate nucleotidohydrolase.